A 404-amino-acid chain; its full sequence is Cysteine desulfurase IscS (404 aa).

Residues 75-76 (AT), N155, Q183, and 203-205 (SSH) each bind pyridoxal 5'-phosphate. Residue K206 is modified to N6-(pyridoxal phosphate)lysine. Position 243 (T243) interacts with pyridoxal 5'-phosphate. The active-site Cysteine persulfide intermediate is the C328. [2Fe-2S] cluster is bound at residue C328.

Belongs to the class-V pyridoxal-phosphate-dependent aminotransferase family. NifS/IscS subfamily. As to quaternary structure, homodimer. Forms a heterotetramer with IscU, interacts with other sulfur acceptors. The cofactor is pyridoxal 5'-phosphate.

The protein localises to the cytoplasm. It catalyses the reaction (sulfur carrier)-H + L-cysteine = (sulfur carrier)-SH + L-alanine. Its pathway is cofactor biosynthesis; iron-sulfur cluster biosynthesis. Its function is as follows. Master enzyme that delivers sulfur to a number of partners involved in Fe-S cluster assembly, tRNA modification or cofactor biosynthesis. Catalyzes the removal of elemental sulfur atoms from cysteine to produce alanine. Functions as a sulfur delivery protein for Fe-S cluster synthesis onto IscU, an Fe-S scaffold assembly protein, as well as other S acceptor proteins. The polypeptide is Cysteine desulfurase IscS (Histophilus somni (strain 129Pt) (Haemophilus somnus)).